A 1012-amino-acid polypeptide reads, in one-letter code: MTNLQDQTQQIVPFIRSLLMPTTGPASIPDDTLEKHTLRSETSTYNLTVGDTGSGLIVFFPGFPGSIVGAHYTLQSNGNYKFDQMLLTAQNLPASYNYCRLVSRSLTVRSSTLPGGVYALNGTINAVTFQGSLSELTDVSYNGLMSATANINDKIGNVLVGEGVTVLSLPTSYDLGYVRLGDPIPAIGLDPKMVATCDSSDRPRVYTITAADDYQFSSQYQAGGVTITLFSANIDAITSLSIGGELVFQTSVQGLILGATIYLIGFDGTAVITRAVAADNGLTAGTDNLMPFNIVIPTSEITQPITSIKLEIVTSKSGGQAGDQMSWSASGSLAVTIHGGNYPGALRPVTLVAYERVATGSVVTVAGVSNFELIPNPELAKNLVTEYGRFDPGAMNYTKLILSERDRLGIKTVWPTREYTDFREYFMEVADLNSPLKIAGAFGFKDIIRALRRIAVPVVSTLFPPAAPLAHAIGEGVDYLLGDEAQAASGTARAASGKARAASGRIRQLTLAADKGYEVVANLFQVPQNPVVDGILASPGILRGAHNLDCVLREGATLFPVVITTVEDAMTPKALNSKMFAVIEGVREDLQPPSQRGSFIRTLSGHRVYGYAPDGVLPLETGRVYTVVPIDGVWDDSIMLSKDPIPPIVGSSGNLAIAYMDVFRPKVPIHVAMTGALNAYGEIENVSFRSTKLATAHRLGLKLAGPGAFDVNTGSNWATFIKRFPHNPRDWDRLPYLNLPYLPPNAGRQYDLAMAASEFKETPELESAVRAMEAAANVDPLFQSALSVFMWLEENGIVTDMANFALSDPNAHRMRNFLANAPQAGSKSQRAKYGTAGYGVEARGPTPEGAQREKDTRISKKMETMGIYFATPEWVALNGHRGPSPGQLKYWQNTREIPDPNEDYLDYVHAEKSRLASEGQILRAATSIYGAPGQAEPPQAFIDEVAKVYEVNHGRGPNQEQMKDLLLTAMEMKHRNPRRAPPKPKPKPNVPTQRPPGRLGRWIRAVSDEDLE.

D30 serves as a coordination point for a divalent metal cation. In terms of domain architecture, Peptidase S50 spans 513–755 (ADKGYEVVAN…AGRQYDLAMA (243 aa)). S652 (nucleophile) is an active-site residue. K692 is an active-site residue. The segment at 971–1012 (EMKHRNPRRAPPKPKPKPNVPTQRPPGRLGRWIRAVSDEDLE) is disordered. Basic residues predominate over residues 975–986 (RNPRRAPPKPKP). The tract at residues 1003-1012 (IRAVSDEDLE) is interaction with VP1 protein.

In terms of assembly, homotrimer. A central divalent metal stabilizes the VP2 trimer. Interacts with host ITGA4/ITGB1. As to quaternary structure, homodimer. Interacts (via C-terminus) with VP1 in the cytoplasm. Interacts with VP2. Specific enzymatic cleavages yield mature proteins. The capsid assembly seems to be regulated by polyprotein processing. The protease VP4 cleaves itself off the polyprotein, thus releasing pre-VP2 and VP3 within the infected cell. During capsid assembly, the C-terminus of pre-VP2 is further processed by VP4, giving rise to VP2, the external capsid protein and three small peptides that all stay closely associated with the capsid.

It localises to the virion. The protein resides in the host cytoplasm. Its function is as follows. Capsid protein VP2 self assembles to form an icosahedral capsid with a T=13 symmetry, about 70 nm in diameter, and consisting of 260 VP2 trimers. The capsid encapsulates the genomic dsRNA. VP2 is also involved in attachment and entry into the host cell by interacting with host ITGA4/ITGB1. The precursor of VP2 plays an important role in capsid assembly. First, pre-VP2 and VP2 oligomers assemble to form a procapsid. Then, the pre-VP2 intermediates may be processed into VP2 proteins by proteolytic cleavage mediated by VP4 to obtain the mature virion. The final capsid is composed of pentamers and hexamers but VP2 has a natural tendency to assemble into all-pentameric structures. Therefore pre-VP2 may be required to allow formation of the hexameric structures. Functionally, protease VP4 is a serine protease that cleaves the polyprotein into its final products. Pre-VP2 is first partially cleaved, and may be completely processed by VP4 upon capsid maturation. In terms of biological role, capsid protein VP3 plays a key role in virion assembly by providing a scaffold for the capsid made of VP2. May self-assemble to form a T=4-like icosahedral inner-capsid composed of at least 180 trimers. Plays a role in genomic RNA packaging by recruiting VP1 into the capsid and interacting with the dsRNA genome segments to form a ribonucleoprotein complex. Additionally, the interaction of the VP3 C-terminal tail with VP1 removes the inherent structural blockade of the polymerase active site. Thus, VP3 can also function as a transcriptional activator. Its function is as follows. Structural peptide 1 is a small peptide derived from pre-VP2 C-terminus. It destabilizes and perforates cell membranes, suggesting a role during entry. Structural peptide 2 is a small peptide derived from pre-VP2 C-terminus. It is not essential for the virus viability, but viral growth is affected when missing. Functionally, structural peptide 3 is a small peptide derived from pre-VP2 C-terminus. It is not essential for the virus viability, but viral growth is affected when missing. The sequence is that of Structural polyprotein from Avian infectious bursal disease virus (isolate Chicken/UK/UK661/1989) (IBDV).